A 712-amino-acid polypeptide reads, in one-letter code: Polyribonucleotide nucleotidyltransferase (712 aa).

Residues aspartate 485 and aspartate 491 each contribute to the Mg(2+) site. The KH domain maps to 552–611; sequence PKITTISVPKEKIRDVIGQGGKVIREIVEYSGAKIDINDDGTIMIAASSEDQATRAIERI. The S1 motif domain occupies 621-689; sequence GAIYTGKVVK…DRGKVKLSMR (69 aa).

It belongs to the polyribonucleotide nucleotidyltransferase family. It depends on Mg(2+) as a cofactor.

The protein resides in the cytoplasm. The enzyme catalyses RNA(n+1) + phosphate = RNA(n) + a ribonucleoside 5'-diphosphate. Functionally, involved in mRNA degradation. Catalyzes the phosphorolysis of single-stranded polyribonucleotides processively in the 3'- to 5'-direction. This is Polyribonucleotide nucleotidyltransferase from Gluconacetobacter diazotrophicus (strain ATCC 49037 / DSM 5601 / CCUG 37298 / CIP 103539 / LMG 7603 / PAl5).